We begin with the raw amino-acid sequence, 247 residues long: Granulin (247 aa).

Belongs to the polyhedrin family.

Its function is as follows. Component of the virus occlusion bodies, which are large proteinaceous structures, that protect the virus from the outside environment for extended periods until they are ingested by insect larvae. This chain is Granulin, found in Pieris brassicae granulosis virus (PbGV).